The sequence spans 341 residues: MAGPRNVRTLHGNGGRNNDVMGPKEFWLNIPPITRTLFTLAIVMTIVGRLNLINPWYFIYVWNLTFKKVQIWRLLTSCVMLSSRAMPALMELYSIYDRSSQLERGHFGPGLSNRRGPMVTVDYAYYLCFCILAITTATTIIYGSYYPVVLTSGFISCITYTWSIDNANVQIMFYGLIPVWGKYFPLIQLFISFVFNEGDFVISLIGFTTGYLYTCLDTHTLGPIWGMISRKADPTYGISPNGKFSTPWWFTSLYARITGAHNETATFNNNFANVPSSQRETRTFSGRGQRLGTAPATLSQTSGTDSGRASGSQLRSGPSNLNQFQGRGQRVGQTNSPSDSQ.

The Cytoplasmic portion of the chain corresponds to 1-41 (MAGPRNVRTLHGNGGRNNDVMGPKEFWLNIPPITRTLFTLA). A helical membrane pass occupies residues 42-62 (IVMTIVGRLNLINPWYFIYVW). Over 63–122 (NLTFKKVQIWRLLTSCVMLSSRAMPALMELYSIYDRSSQLERGHFGPGLSNRRGPMVTVD) the chain is Lumenal. Residues 123–143 (YAYYLCFCILAITTATTIIYG) traverse the membrane as a helical segment. At 144-170 (SYYPVVLTSGFISCITYTWSIDNANVQ) the chain is on the cytoplasmic side. Residues 171-191 (IMFYGLIPVWGKYFPLIQLFI) traverse the membrane as a helical segment. Residue S192 is a topological domain, lumenal. The helical transmembrane segment at 193–213 (FVFNEGDFVISLIGFTTGYLY) threads the bilayer. Topologically, residues 214–341 (TCLDTHTLGP…GQTNSPSDSQ (128 aa)) are cytoplasmic. Polar residues-rich tracts occupy residues 276–286 (SSQRETRTFSG) and 296–341 (ATLS…SDSQ). The tract at residues 276–341 (SSQRETRTFS…GQTNSPSDSQ (66 aa)) is disordered.

The protein belongs to the derlin family.

It is found in the endoplasmic reticulum membrane. In terms of biological role, may be involved in the degradation process of some misfolded endoplasmic reticulum (ER) luminal proteins. Its precise role is however unclear and its inability to complement der1 mutations, suggests either that it is not involved in degradation process of misfolded proteins, or that it participates in the destruction of specific misfolded ER luminal proteins. The sequence is that of DER1-like family member protein 1 (DFM1) from Saccharomyces cerevisiae (strain ATCC 204508 / S288c) (Baker's yeast).